The following is a 202-amino-acid chain: Small ribosomal subunit protein uS3 (202 aa).

One can recognise a KH type-2 domain in the interval 18–87; the sequence is LNEYLQRQLV…NPQIDVVEVP (70 aa).

This sequence belongs to the universal ribosomal protein uS3 family. Part of the 30S ribosomal subunit.

Its function is as follows. Binds the lower part of the 30S subunit head. This Thermofilum pendens (strain DSM 2475 / Hrk 5) protein is Small ribosomal subunit protein uS3.